We begin with the raw amino-acid sequence, 549 residues long: Probable protein kinase UbiB (549 aa).

Positions 123–501 (DFDDVPLASA…QHKAHKSNYL (379 aa)) constitute a Protein kinase domain. Residues 129–137 (LASASIAQV) and Lys-152 contribute to the ATP site. Asp-287 serves as the catalytic Proton acceptor. Helical transmembrane passes span 498–517 (SNYL…ILFT) and 521–540 (TLWA…LLGW).

Belongs to the ABC1 family. UbiB subfamily.

Its subcellular location is the cell inner membrane. Its pathway is cofactor biosynthesis; ubiquinone biosynthesis [regulation]. In terms of biological role, is probably a protein kinase regulator of UbiI activity which is involved in aerobic coenzyme Q (ubiquinone) biosynthesis. This Shewanella denitrificans (strain OS217 / ATCC BAA-1090 / DSM 15013) protein is Probable protein kinase UbiB.